Consider the following 205-residue polypeptide: Holliday junction branch migration complex subunit RuvA (205 aa).

The segment at 1 to 67 (MIGWLKGDVQ…ADNLQLFGFL (67 aa)) is domain I. The domain II stretch occupies residues 68-146 (QLAERDLFRE…DSVASTGPER (79 aa)). The tract at residues 147–155 (NQLDPVAPD) is flexible linker. Residues 155–205 (DLIATLETLGFETHEIRDALQRLNGMGGPQDGDDDDAWLRACIKLMSSTDP) form a domain III region.

The protein belongs to the RuvA family. As to quaternary structure, homotetramer. Forms an RuvA(8)-RuvB(12)-Holliday junction (HJ) complex. HJ DNA is sandwiched between 2 RuvA tetramers; dsDNA enters through RuvA and exits via RuvB. An RuvB hexamer assembles on each DNA strand where it exits the tetramer. Each RuvB hexamer is contacted by two RuvA subunits (via domain III) on 2 adjacent RuvB subunits; this complex drives branch migration. In the full resolvosome a probable DNA-RuvA(4)-RuvB(12)-RuvC(2) complex forms which resolves the HJ.

It is found in the cytoplasm. Functionally, the RuvA-RuvB-RuvC complex processes Holliday junction (HJ) DNA during genetic recombination and DNA repair, while the RuvA-RuvB complex plays an important role in the rescue of blocked DNA replication forks via replication fork reversal (RFR). RuvA specifically binds to HJ cruciform DNA, conferring on it an open structure. The RuvB hexamer acts as an ATP-dependent pump, pulling dsDNA into and through the RuvAB complex. HJ branch migration allows RuvC to scan DNA until it finds its consensus sequence, where it cleaves and resolves the cruciform DNA. The protein is Holliday junction branch migration complex subunit RuvA of Parasynechococcus marenigrum (strain WH8102).